A 457-amino-acid chain; its full sequence is MQKYTSEARQLLALAIPVILAQVAQTAMGFVDTVMAGGYSATDMAAVAIGTSIWLPAILFGHGLLLALTPVIAQLNGSGRRERIAHQVRQGFWLAGFVSVLVMIVLWNAGYIIRSMHNIDPALADKAVGYLRALLWGAPGYLFFQVARNQCEGLAKTKPGMVMGFLGLLVNIPVNYIFIYGHFGMPELGGIGCGVATAAVYWVMFIAMLSYIKHARSMRDIRNEKGFGKPDSVVMKRLIQLGLPIALALFFEVTLFAVVALLVSPLGIVDVAGHQIALNFSSLMFVLPMSLAAAVTIRVGYRLGQGSTLGAQTAARTGLGVGICMAVVTAIFTVTLRKHIALLYNDNPEVVALAAQLMLLAAVYQISDSIQVIGSGILRGYKDTRSIFFITFTAYWVLGLPSGYILALTDLVVDRMGPAGFWMGFIIGLTSAAVLMMLRMRYLQRQPSAIILQRAAR.

12 helical membrane-spanning segments follow: residues leucine 11 to valine 31, isoleucine 53 to alanine 73, tryptophan 93 to isoleucine 113, alanine 127 to alanine 147, glycine 160 to tyrosine 180, leucine 188 to methionine 208, leucine 243 to valine 263, isoleucine 276 to threonine 296, alanine 314 to valine 334, valine 350 to isoleucine 370, isoleucine 387 to alanine 407, and proline 418 to leucine 438.

This sequence belongs to the multi antimicrobial extrusion (MATE) (TC 2.A.66.1) family. MdtK subfamily.

The protein resides in the cell inner membrane. Functionally, multidrug efflux pump that functions probably as a Na(+)/drug antiporter. The chain is Multidrug resistance protein MdtK from Salmonella newport (strain SL254).